Reading from the N-terminus, the 78-residue chain is Esculentin-2ISa (78 aa).

The N-terminal stretch at 1–22 (MFTLKKSLLLLFFLGTISLSVC) is a signal peptide. Residues 23 to 39 (KQERDADYEDKGEVEEV) constitute a propeptide, removed in mature form. An intrachain disulfide couples C72 to C78.

In terms of tissue distribution, expressed by the skin glands.

The protein localises to the secreted. In terms of biological role, has antimicrobial activity against Gram-negative bacterium E.coli ATCC 8739 (MIC=12.5 ug), against Gram positive bacteria S.aureus ATCC 6538 (MIC=3.1 ug), methicillin-resistant S.aureus ATCC 43300 (MIC=25 ug), B.subtilis ATCC 6633 (MIC=6.3 ug) and against fungus C.albicans ATCC 90028 (MIC=100 ug). The sequence is that of Esculentin-2ISa from Odorrana ishikawae (Ishikawa's frog).